The sequence spans 354 residues: UDP-N-acetylglucosamine--N-acetylmuramyl-(pentapeptide) pyrophosphoryl-undecaprenol N-acetylglucosamine transferase (354 aa).

Residues 11–13, arginine 164, serine 194, and glutamine 289 each bind UDP-N-acetyl-alpha-D-glucosamine; that span reads TAG.

It belongs to the glycosyltransferase 28 family. MurG subfamily.

Its subcellular location is the cell membrane. The enzyme catalyses di-trans,octa-cis-undecaprenyl diphospho-N-acetyl-alpha-D-muramoyl-L-alanyl-D-glutamyl-meso-2,6-diaminopimeloyl-D-alanyl-D-alanine + UDP-N-acetyl-alpha-D-glucosamine = di-trans,octa-cis-undecaprenyl diphospho-[N-acetyl-alpha-D-glucosaminyl-(1-&gt;4)]-N-acetyl-alpha-D-muramoyl-L-alanyl-D-glutamyl-meso-2,6-diaminopimeloyl-D-alanyl-D-alanine + UDP + H(+). It functions in the pathway cell wall biogenesis; peptidoglycan biosynthesis. Functionally, cell wall formation. Catalyzes the transfer of a GlcNAc subunit on undecaprenyl-pyrophosphoryl-MurNAc-pentapeptide (lipid intermediate I) to form undecaprenyl-pyrophosphoryl-MurNAc-(pentapeptide)GlcNAc (lipid intermediate II). This is UDP-N-acetylglucosamine--N-acetylmuramyl-(pentapeptide) pyrophosphoryl-undecaprenol N-acetylglucosamine transferase from Clostridium botulinum (strain Langeland / NCTC 10281 / Type F).